The following is a 127-amino-acid chain: MSRRNTDAITIHSILDWIEDNLESPLSLEKVSERSGYSKWHLQRMFKKETGHSLGQYIRSRKMTEIAQKLKESNEPILYLAERYGFESQQTLTRTFKNYFDVPPHKYRITNMHGESRYMLPLNHGNY.

In terms of domain architecture, HTH araC/xylS-type spans 12–110; sequence HSILDWIEDN…DVPPHKYRIT (99 aa). DNA-binding regions (H-T-H motif) lie at residues 29–50 and 77–100; these read EKVS…KKET and ILYL…KNYF.

Monomer.

In terms of biological role, may be a transcriptional activator of genes involved in the multiple antibiotic resistance (Mar) phenotype. It can also activate genes such as sodA, zwf and micF. This chain is Multiple antibiotic resistance protein MarA (marA), found in Salmonella enteritidis.